Consider the following 506-residue polypeptide: Protein NEN3 (506 aa).

Positions 15–176 (FFDLETAVPT…LDDVRMNLEV (162 aa)) constitute an Exonuclease domain. 2 residues coordinate Mg(2+): aspartate 17 and glutamate 19. Histidine 164 acts as the Proton donor/acceptor in catalysis. Mg(2+) is bound at residue aspartate 169. 2 disordered regions span residues 204–240 (KSPR…SSVD) and 289–313 (AEEA…KDES). Residues 222–238 (SSTSSSSSPKTDPSSSS) are compositionally biased toward low complexity. Over residues 290 to 299 (EEAKTVRQQD) the composition is skewed to basic and acidic residues.

It depends on Mg(2+) as a cofactor.

Probable exonuclease that may be involved in enuclation of sieve elements. The sequence is that of Protein NEN3 (NEN3) from Arabidopsis thaliana (Mouse-ear cress).